A 122-amino-acid chain; its full sequence is MIQTETRLKVADNSGARELLVIRVMGGSKRKTGNIGDIVVAAVKQATPGGVVKKGDVVKAVIVRTKSGARREDGSYIKFDENAAVIINADKSPRGTRIFGPVARELREGDFMKIVSLAPEVL.

This sequence belongs to the universal ribosomal protein uL14 family. Part of the 50S ribosomal subunit. Forms a cluster with proteins L3 and L19. In the 70S ribosome, L14 and L19 interact and together make contacts with the 16S rRNA in bridges B5 and B8.

Binds to 23S rRNA. Forms part of two intersubunit bridges in the 70S ribosome. This Lactobacillus delbrueckii subsp. bulgaricus (strain ATCC BAA-365 / Lb-18) protein is Large ribosomal subunit protein uL14.